A 74-amino-acid chain; its full sequence is Small ribosomal subunit protein bS18 (74 aa).

The protein belongs to the bacterial ribosomal protein bS18 family. In terms of assembly, part of the 30S ribosomal subunit. Forms a tight heterodimer with protein bS6.

Binds as a heterodimer with protein bS6 to the central domain of the 16S rRNA, where it helps stabilize the platform of the 30S subunit. This is Small ribosomal subunit protein bS18 from Coprothermobacter proteolyticus (strain ATCC 35245 / DSM 5265 / OCM 4 / BT).